Reading from the N-terminus, the 285-residue chain is ATP phosphoribosyltransferase (285 aa).

The protein belongs to the ATP phosphoribosyltransferase family. Long subfamily. Requires Mg(2+) as cofactor.

It is found in the cytoplasm. It carries out the reaction 1-(5-phospho-beta-D-ribosyl)-ATP + diphosphate = 5-phospho-alpha-D-ribose 1-diphosphate + ATP. It functions in the pathway amino-acid biosynthesis; L-histidine biosynthesis; L-histidine from 5-phospho-alpha-D-ribose 1-diphosphate: step 1/9. With respect to regulation, feedback inhibited by histidine. In terms of biological role, catalyzes the condensation of ATP and 5-phosphoribose 1-diphosphate to form N'-(5'-phosphoribosyl)-ATP (PR-ATP). Has a crucial role in the pathway because the rate of histidine biosynthesis seems to be controlled primarily by regulation of HisG enzymatic activity. The sequence is that of ATP phosphoribosyltransferase from Metallosphaera sedula (strain ATCC 51363 / DSM 5348 / JCM 9185 / NBRC 15509 / TH2).